The following is a 485-amino-acid chain: Zinc finger protein 577 (485 aa).

The interval 1-21 (MKNATIVMSVRREQGSSSGEG) is disordered. Positions 23 to 94 (LSFEDVAVGF…EGAAHSQICP (72 aa)) constitute a KRAB domain. The segment at 158–180 (HECSVCGRAFSRKAQLIQHQRTE) adopts a C2H2-type 1; degenerate zinc-finger fold. C2H2-type zinc fingers lie at residues 186 to 208 (HGCG…QRTH), 214 to 236 (HECS…QRTH), 242 to 264 (YRCS…QRSH), 270 to 292 (YGCS…QRLH), 298 to 320 (YKCS…QRIH), 326 to 348 (YECS…QRTH), and 354 to 376 (YSCR…EKTH).

It belongs to the krueppel C2H2-type zinc-finger protein family.

It is found in the nucleus. In terms of biological role, may be involved in transcriptional regulation. The sequence is that of Zinc finger protein 577 (ZNF577) from Homo sapiens (Human).